A 222-amino-acid chain; its full sequence is Global nitrogen regulator (222 aa).

6–128 (NSLLTMFREL…NVMLQGLSSR (123 aa)) lines the a nucleoside 3',5'-cyclic phosphate pocket. The 74-residue stretch at 142–215 (RDMGSRLVSF…KKRITVFNPV (74 aa)) folds into the HTH crp-type domain. The H-T-H motif DNA-binding region spans 175-194 (HQAIAEAIGSTRVTVTRLLG).

In terms of biological role, required for full expression of proteins subject to ammonium repression. Transcriptional activator of genes subject to nitrogen control. This is Global nitrogen regulator (ntcA) from Synechococcus elongatus (strain ATCC 33912 / PCC 7942 / FACHB-805) (Anacystis nidulans R2).